The primary structure comprises 160 residues: Protein-export protein SecB (160 aa).

It belongs to the SecB family. In terms of assembly, homotetramer, a dimer of dimers. One homotetramer interacts with 1 SecA dimer.

Its subcellular location is the cytoplasm. Functionally, one of the proteins required for the normal export of preproteins out of the cell cytoplasm. It is a molecular chaperone that binds to a subset of precursor proteins, maintaining them in a translocation-competent state. It also specifically binds to its receptor SecA. This is Protein-export protein SecB from Rhizobium etli (strain ATCC 51251 / DSM 11541 / JCM 21823 / NBRC 15573 / CFN 42).